The following is a 464-amino-acid chain: Cysteine--tRNA ligase (464 aa).

C29 contacts Zn(2+). Positions 31 to 41 (ATVQGVPHIGH) match the 'HIGH' region motif. The interval 160–180 (RLDEVQQGESTASGKRDPRDF) is disordered. The Zn(2+) site is built by C208, H233, and E237. The 'KMSKS' region motif lies at 264–268 (KMSKS). K267 lines the ATP pocket.

Belongs to the class-I aminoacyl-tRNA synthetase family. Monomer. Zn(2+) serves as cofactor.

The protein resides in the cytoplasm. It carries out the reaction tRNA(Cys) + L-cysteine + ATP = L-cysteinyl-tRNA(Cys) + AMP + diphosphate. In Saccharopolyspora erythraea (strain ATCC 11635 / DSM 40517 / JCM 4748 / NBRC 13426 / NCIMB 8594 / NRRL 2338), this protein is Cysteine--tRNA ligase.